Reading from the N-terminus, the 677-residue chain is Polyunsaturated fatty acid lipoxygenase ALOX8 (677 aa).

In terms of domain architecture, PLAT spans 2–125 (AKCRVRVSTG…ELVLREGAAK (124 aa)). Ca(2+) is bound by residues G15, G17, D39, H40, G42, E44, D86, and A87. The 552-residue stretch at 126-677 (VSWQDHHPTL…PPLIENSVSI (552 aa)) folds into the Lipoxygenase domain. The Fe cation site is built by H374, H379, H554, and I677.

Belongs to the lipoxygenase family. The cofactor is Fe cation. Expressed in epidermis and brain. No expression found in heart, spleen, liver, skeletal muscle, kidney or testis.

Its subcellular location is the cytoplasm. It localises to the cytosol. It is found in the membrane. The catalysed reaction is (9Z,12Z)-octadecadienoate + O2 = (9S)-hydroperoxy-(10E,12Z)-octadecadienoate. It carries out the reaction (5Z,8Z,11Z,14Z)-eicosatetraenoate + O2 = (8S)-hydroperoxy-(5Z,9E,11Z,14Z)-eicosatetraenoate. The enzyme catalyses (15S)-hydroperoxy-(5Z,8Z,11Z,13E)-eicosatetraenoate + O2 = (8S,15S)-dihydroperoxy-(5Z,9E,11Z,13E)-eicosatetraenoate. It catalyses the reaction (8S)-hydroperoxy-(5Z,9E,11Z,14Z)-eicosatetraenoate + O2 = (8S,15S)-dihydroperoxy-(5Z,9E,11Z,13E)-eicosatetraenoate. The catalysed reaction is 1-octadecanoyl-2-(5Z,8Z,11Z,14Z-eicosatetraenoyl)-sn-glycero-3-phosphocholine + O2 = 1-octadecanoyl-2-(15-hydroperoxy-5Z,8Z,11Z,13E-eicosatetraenoyl)-sn-glycero-3-phosphocholine. It carries out the reaction a 1-acyl-2-(5Z,8Z,11Z,14Z-eicosatetraenoyl)-sn-glycero-3-phospho-(1D-myo-inositol) + O2 = a 1-acyl-2-(15-hydroperoxy-5Z,8Z,11Z,13E-eicosatetraenoyl)-sn-glycero-3-phospho-(1D-myo-inositol). The enzyme catalyses a 1-acyl-2-(8Z,11Z,14Z-eicosatrienoyl)-sn-glycero-3-phospho-(1D-myo-inositol) + O2 = a 1-acyl-2-(15-hydroperoxy-8Z,11Z,13E-eicosatrienoyl)-sn-glycero-3-phospho-(1D-myo-inositol). It catalyses the reaction (5Z,8Z,11Z,14Z)-eicosatetraenoate + O2 = 9-hydroperoxy-(5Z,7E,11Z,14Z)-eicosatetraenoate. The catalysed reaction is (5Z,8Z,11Z,14Z)-eicosatetraenoate + O2 = 11-hydroperoxy-(5Z,8Z,12E,14Z)-eicosatetraenoate. It carries out the reaction (8Z,11Z,14Z)-eicosatrienoate + O2 = 15-hydroperoxy-(8Z,11Z,13E)-eicosatrienoate. Its pathway is lipid metabolism; hydroperoxy eicosatetraenoic acid biosynthesis. Functionally, non-heme iron-containing dioxygenase that catalyzes the stereo-specific peroxidation of free and esterified polyunsaturated fatty acids generating a spectrum of bioactive lipid mediators. Catalyzes the peroxidation of arachidonate and linoleate into (8S)-HPETE and (9S)-HPODE respectively. In addition to generate (8S)-HPETE from free arachidonic acid (AA), may produce other HETE isomers from phospholipid-esterified polyunsaturated fatty acids and minor products derived from (8S)-HPETE itself that may include leukotriene A4 and 8,15-diHPETE. With free arachidonate as substrate, has no detectable 15S-lipoxygenase activity and only displays a 8S-lipoxygenase activity. However may have a 15S-lipoxygenase activity with (8S)-HPETE to produce (8S,15S)-diHPETE and when oxidizes directly arachidonic acid esterified to membrane-bound phospholipids to produce a phospholipid-esterified 15-HpETE. May also catalyze (15S)-HPETE peroxidation to produce 8,15-diHPETE. May play a role in keratinocyte differentiation through activation of the peroxisome proliferator activated receptor signaling pathway. The polypeptide is Polyunsaturated fatty acid lipoxygenase ALOX8 (Mus musculus (Mouse)).